The primary structure comprises 112 residues: Large ribosomal subunit protein mL53 (112 aa).

The protein belongs to the mitochondrion-specific ribosomal protein mL53 family. In terms of assembly, component of the mitochondrial ribosome large subunit (39S) which comprises a 16S rRNA and about 50 distinct proteins.

Its subcellular location is the mitochondrion. The chain is Large ribosomal subunit protein mL53 (MRPL53) from Pongo abelii (Sumatran orangutan).